We begin with the raw amino-acid sequence, 158 residues long: Snaclec flavocetin-A subunit alpha (158 aa).

The first 23 residues, 1 to 23 (MERLIFVSFGLLVVILSLSGTGA), serve as a signal peptide directing secretion. Cystine bridges form between Cys-27-Cys-38, Cys-55-Cys-152, and Cys-127-Cys-144. The region spanning 34-153 (YDRYCYQAFS…CGTENPFVCK (120 aa)) is the C-type lectin domain.

Belongs to the snaclec family. Tetramer of heterodimers of alpha and beta subunits (alphabeta)(4); disulfide-linked. In terms of tissue distribution, expressed by the venom gland.

It localises to the secreted. Functionally, strong platelet aggregation inhibitor. Binds specifically to platelet glycoprotein Ibalpha (GP1BA) with high affinity and inhibits vWF-dependent platelet aggregation. Has also been observed to induce small agglutinates in washed platelets by binding to GPIb. The sequence is that of Snaclec flavocetin-A subunit alpha from Protobothrops flavoviridis (Habu).